The chain runs to 171 residues: Phosphinothricin N-acetyltransferase (171 aa).

The region spanning 7–171 is the N-acetyltransferase domain; that stretch reads VQVRPGVEED…WDVAWYERPL (165 aa). Acetyl-CoA is bound by residues 94-96, 102-107, and Asn-133; these read VYV and GRGIGS.

This sequence belongs to the acetyltransferase family. PAT/BAR subfamily.

The enzyme catalyses phosphinothricin + acetyl-CoA = N-acetylphosphinothricin + CoA + H(+). In terms of biological role, inactivates phosphinothricin (PPT) by transfer of an acetyl group from acetyl CoA. The physiological substrate could be a structurally related compound. The sequence is that of Phosphinothricin N-acetyltransferase from Streptomyces coelicolor (strain ATCC BAA-471 / A3(2) / M145).